The following is a 334-amino-acid chain: Ribosomal RNA small subunit methyltransferase H (334 aa).

Residues 34-36 (GGY), aspartate 52, alanine 87, aspartate 100, and glutamine 107 each bind S-adenosyl-L-methionine.

Belongs to the methyltransferase superfamily. RsmH family.

Its subcellular location is the cytoplasm. The enzyme catalyses cytidine(1402) in 16S rRNA + S-adenosyl-L-methionine = N(4)-methylcytidine(1402) in 16S rRNA + S-adenosyl-L-homocysteine + H(+). Its function is as follows. Specifically methylates the N4 position of cytidine in position 1402 (C1402) of 16S rRNA. This Maricaulis maris (strain MCS10) (Caulobacter maris) protein is Ribosomal RNA small subunit methyltransferase H.